Here is a 504-residue protein sequence, read N- to C-terminus: uncharacterized protein (504 aa).

This is an uncharacterized protein from Klebsiella pneumoniae.